A 396-amino-acid polypeptide reads, in one-letter code: L-cysteine desulfidase (396 aa).

Cys-23 acts as the Proton acceptor in catalysis. Positions 287, 329, and 336 each coordinate [4Fe-4S] cluster.

Belongs to the L-cysteine desulfidase family. Homotrimer. [4Fe-4S] cluster is required as a cofactor.

It catalyses the reaction L-cysteine + H2O = hydrogen sulfide + pyruvate + NH4(+) + H(+). In terms of biological role, catalyzes the cleavage of L-cysteine to form 2-aminoprop-2-enoate and sulfide. The former then spontaneously hydrolyzes to pyruvate and NH(3). May be responsible for the production of sulfide required for the biosynthesis of iron-sulfur centers in this archaea. The sequence is that of L-cysteine desulfidase from Methanococcus maripaludis (strain DSM 14266 / JCM 13030 / NBRC 101832 / S2 / LL).